We begin with the raw amino-acid sequence, 546 residues long: Flavin-dependent oxygenase ucdF (546 aa).

An FAD-binding PCMH-type domain is found at 81–263 (QGRIPYYAVM…VNTTIRTFPD (183 aa)).

It belongs to the oxygen-dependent FAD-linked oxidoreductase family.

Its function is as follows. Nonribosomal peptide synthetase that mediates the biosynthesis of usterphenyllins and uscandidusins, p-terphenyl derivatives. The function of ucdF within the pathway still remains to be determined. UcdE further prenylates position C-14 of ring C of usterphenyllin B to form usterphenyllin A. The pathway begin with the biosynthesis of 4-hydroxyphenylpyruvate (HPPA) from L-tyrosine, possibly by the aminotransferase ucdG. The nonribosomal peptide synthetase ucdA then condenses two HPPA units to produce atromentin. The key step in this pathway is the reduction and dehydration of atromentin to form a terphenyl triol intermediate, performed by the NAD-dependent dehydrogenase ucdB. Further O-methylation by the methyltransferase ucdC forms terphenyllin carrying two methoxy moieties at C-9 and C-12, and subsequent dihydroxylation at C-3 of ring A and C-15 of ring C by the flavin-dependent oxygenase ucdD leads to 3,15-dihydroxyterphenyllin. Prenylation by ucdE at position C-5 of ring A forms usterphenyllin B, and is followed by a second prenylation at position C-14 of ring C to form usterphenyllin A. The following furan ring formation that leads to uscandidusins A and B was proven to be an unexpected spontaneous non-enzymatic reaction. This chain is Flavin-dependent oxygenase ucdF, found in Aspergillus ustus.